The chain runs to 277 residues: Large ribosomal subunit protein uL2 (277 aa).

Residues 222-277 (GSVMNPNDHPHGGGEGKSPVGHPGPLTPWGKPALGLKTRKNKKYSDKFIIKRKNKK) form a disordered region.

It belongs to the universal ribosomal protein uL2 family. In terms of assembly, part of the 50S ribosomal subunit. Forms a bridge to the 30S subunit in the 70S ribosome.

In terms of biological role, one of the primary rRNA binding proteins. Required for association of the 30S and 50S subunits to form the 70S ribosome, for tRNA binding and peptide bond formation. It has been suggested to have peptidyltransferase activity; this is somewhat controversial. Makes several contacts with the 16S rRNA in the 70S ribosome. The protein is Large ribosomal subunit protein uL2 of Clostridium kluyveri (strain NBRC 12016).